Reading from the N-terminus, the 88-residue chain is Small ribosomal subunit protein bS20 (88 aa).

A disordered region spans residues 1–33; the sequence is MANTSSAKKATRKIARRTAVNKSRRTQMRGSVR.

The protein belongs to the bacterial ribosomal protein bS20 family.

Functionally, binds directly to 16S ribosomal RNA. The chain is Small ribosomal subunit protein bS20 from Rhodopseudomonas palustris (strain BisB5).